The chain runs to 433 residues: Serine hydroxymethyltransferase (433 aa).

(6S)-5,6,7,8-tetrahydrofolate is bound by residues leucine 132 and 136–138 (GHL). Lysine 241 is modified (N6-(pyridoxal phosphate)lysine).

It belongs to the SHMT family. As to quaternary structure, homodimer. The cofactor is pyridoxal 5'-phosphate.

It localises to the cytoplasm. The catalysed reaction is (6R)-5,10-methylene-5,6,7,8-tetrahydrofolate + glycine + H2O = (6S)-5,6,7,8-tetrahydrofolate + L-serine. Its pathway is one-carbon metabolism; tetrahydrofolate interconversion. It participates in amino-acid biosynthesis; glycine biosynthesis; glycine from L-serine: step 1/1. Its function is as follows. Catalyzes the reversible interconversion of serine and glycine with tetrahydrofolate (THF) serving as the one-carbon carrier. This reaction serves as the major source of one-carbon groups required for the biosynthesis of purines, thymidylate, methionine, and other important biomolecules. Also exhibits THF-independent aldolase activity toward beta-hydroxyamino acids, producing glycine and aldehydes, via a retro-aldol mechanism. This chain is Serine hydroxymethyltransferase, found in Bradyrhizobium sp. (strain ORS 278).